Reading from the N-terminus, the 323-residue chain is Peridinin-chlorophyll a-binding protein 3 (323 aa).

2 repeat units span residues 1-173 (DGIA…RYVP) and 174-323 (DGPV…SAVV).

In terms of assembly, homotrimer.

The protein resides in the plastid. Its subcellular location is the chloroplast. In terms of biological role, water-soluble antenna for capture of solar energy in the blue-green range. Peridinin is an asymmetric carotenoid. This chain is Peridinin-chlorophyll a-binding protein 3, found in Amphidinium carterae (Dinoflagellate).